The primary structure comprises 136 residues: 5-hydroxyisourate hydrolase (136 aa).

Positions 1 to 22 are cleaved as a signal peptide; it reads MKRHILATVIASLVAAPAMALA. Substrate is bound by residues His-31, Arg-69, and Tyr-133.

This sequence belongs to the transthyretin family. 5-hydroxyisourate hydrolase subfamily. Homotetramer.

It is found in the periplasm. It catalyses the reaction 5-hydroxyisourate + H2O = 5-hydroxy-2-oxo-4-ureido-2,5-dihydro-1H-imidazole-5-carboxylate + H(+). Catalyzes the hydrolysis of 5-hydroxyisourate (HIU) to 2-oxo-4-hydroxy-4-carboxy-5-ureidoimidazoline (OHCU). In Salmonella dublin, this protein is 5-hydroxyisourate hydrolase (hiuH).